The primary structure comprises 712 residues: Autophagy-related protein 13 (712 aa).

Disordered stretches follow at residues 388 to 443 and 568 to 611; these read AGST…ETPP and GSVG…DDDE. Low complexity predominate over residues 402–415; sequence SSVGSGSKYSSSFG. An ATG17-binding region spans residues 412–420; sequence SSFGRIRRH. The segment covering 424–439 has biased composition (basic and acidic residues); it reads RRSESIDRTAKPRKSN. Positions 441–500 are ATG1-binding; the sequence is TPPEDLLEFVKLLEDKKELNMKPSTILPQQDISSSLIKFQSMKPNNDTLSDNLSMSMSID. Positions 576–585 are enriched in acidic residues; that stretch reads TNEDSKEDED.

It belongs to the ATG13 family. Fungi subfamily. As to quaternary structure, hypophosphorylated form interacts with ATG1 to form the ATG1-ATG13 kinase complex. The ATG1-ATG13 complex interacts with the ATG17-ATG29-ATG31 complex through direct interaction with ATG17. Interacts with VAC8. In terms of processing, hyperphosphorylated under nutrient-rich conditions. Starvation and TOR inactivation results in ATG13 partial dephosphorylation leading to ATG1-binding. Dephosphorylation induces ATG17-binding.

The protein localises to the cytoplasm. The protein resides in the preautophagosomal structure. Activates the ATG1 kinase in a nutritional condition dependent manner through the TOR pathway, leading to autophagy. Involved in ATG9 and ATG23 cycling through the pre-autophagosomal structure. Also involved in cytoplasm to vacuole transport (Cvt) and more specifically in Cvt vesicle formation. Seems to play a role in the switching machinery regulating the conversion between the Cvt pathway and autophagy. Finally, ATG13 is also required for glycogen storage during stationary phase. This is Autophagy-related protein 13 from Kluyveromyces marxianus (strain DMKU3-1042 / BCC 29191 / NBRC 104275) (Yeast).